The chain runs to 162 residues: Interleukin-15 (162 aa).

An N-terminal signal peptide occupies residues 1–29 (MRISKPHLRSVSIQCYLCLLLNSHFLTEA). A propeptide spanning residues 30–48 (GIHVFILGCFSAGLPKTEA) is cleaved from the precursor. Cystine bridges form between C83/C133 and C90/C136. N-linked (GlcNAc...) asparagine glycosylation occurs at N127.

It belongs to the IL-15/IL-21 family.

The protein localises to the secreted. Functionally, cytokine that plays a major role in the development of inflammatory and protective immune responses to microbial invaders and parasites by modulating immune cells of both the innate and adaptive immune systems. Stimulates the proliferation of natural killer cells, T-cells and B-cells and promotes the secretion of several cytokines. In monocytes, induces the production of IL8 and monocyte chemotactic protein 1/CCL2, two chemokines that attract neutrophils and monocytes respectively to sites of infection. Unlike most cytokines, which are secreted in soluble form, IL15 is expressed in association with its high affinity IL15RA on the surface of IL15-producing cells and delivers signals to target cells that express IL2RB and IL2RG receptor subunits. Binding to its receptor triggers the phosphorylation of JAK1 and JAK3 and the recruitment and subsequent phosphorylation of signal transducer and activator of transcription-3/STAT3 and STAT5. In mast cells, induces the rapid tyrosine phosphorylation of STAT6 and thereby controls mast cell survival and release of cytokines such as IL4. This is Interleukin-15 (IL15) from Macaca mulatta (Rhesus macaque).